A 341-amino-acid polypeptide reads, in one-letter code: MLSGVELSRDEALVLLRSDPANYLSLLAAAARLRSAYFGNSVKLNYLVNLKSGLCPEDCTYCSQRLGSAAQILKYSWLKSEDAIDQAEQGLAGGASRVCFVASGRGPSDRDVDRVAGLVGDFKTRNPQAEVCACLGILKEGQAERLKSCGVDAYNHNLNTSEEKYSEICTTHEFSDRTNTVKAAKAAGLSPCSGLIVGMGESDEELIDALFALRELGSESVPVNFLMPFEGTPLADTWLLTPVKCLQILCVARFVAPRSELRIAGSREMHLRSLQPLALHVANSIFLGDYLTSEGQSAAEDLAMIEDGGFVILDPRASAPQGGVEPVLRKRGAGTELQPNA.

The Radical SAM core domain occupies 40-264 (NSVKLNYLVN…VAPRSELRIA (225 aa)). The [4Fe-4S] cluster site is built by cysteine 55, cysteine 59, and cysteine 62. The [2Fe-2S] cluster site is built by cysteine 99, cysteine 132, cysteine 192, and arginine 262. Residues 317-341 (ASAPQGGVEPVLRKRGAGTELQPNA) form a disordered region.

Belongs to the radical SAM superfamily. Biotin synthase family. In terms of assembly, homodimer. The cofactor is [4Fe-4S] cluster. [2Fe-2S] cluster serves as cofactor.

It carries out the reaction (4R,5S)-dethiobiotin + (sulfur carrier)-SH + 2 reduced [2Fe-2S]-[ferredoxin] + 2 S-adenosyl-L-methionine = (sulfur carrier)-H + biotin + 2 5'-deoxyadenosine + 2 L-methionine + 2 oxidized [2Fe-2S]-[ferredoxin]. The protein operates within cofactor biosynthesis; biotin biosynthesis; biotin from 7,8-diaminononanoate: step 2/2. Its function is as follows. Catalyzes the conversion of dethiobiotin (DTB) to biotin by the insertion of a sulfur atom into dethiobiotin via a radical-based mechanism. This is Biotin synthase from Renibacterium salmoninarum (strain ATCC 33209 / DSM 20767 / JCM 11484 / NBRC 15589 / NCIMB 2235).